Consider the following 93-residue polypeptide: Leydig cell tumor 10 kDa protein (93 aa).

The segment at methionine 1 to valine 41 is disordered. Residues lysine 7–alanine 18 show a composition bias toward low complexity. The span at glycine 25–arginine 39 shows a compositional bias: basic residues.

Belongs to the UPF0390 family. In terms of tissue distribution, leydig cell tumor, testis and placenta.

May have a potential role in hypercalcemia of malignancy. The polypeptide is Leydig cell tumor 10 kDa protein (Rattus norvegicus (Rat)).